The chain runs to 309 residues: 2-phospho-L-lactate transferase (309 aa).

7,8-didemethyl-8-hydroxy-5-deazariboflavin contacts are provided by aspartate 48 and lysine 87.

It belongs to the CofD family. Homodimer. It depends on Mg(2+) as a cofactor.

It carries out the reaction (2S)-lactyl-2-diphospho-5'-guanosine + 7,8-didemethyl-8-hydroxy-5-deazariboflavin = oxidized coenzyme F420-0 + GMP + H(+). It participates in cofactor biosynthesis; coenzyme F420 biosynthesis. In terms of biological role, catalyzes the transfer of the 2-phospholactate moiety from (2S)-lactyl-2-diphospho-5'-guanosine to 7,8-didemethyl-8-hydroxy-5-deazariboflavin (FO) with the formation of oxidized coenzyme F420-0 and GMP. The sequence is that of 2-phospho-L-lactate transferase from Methanosarcina barkeri (strain Fusaro / DSM 804).